Here is a 1337-residue protein sequence, read N- to C-terminus: Zinc finger protein 335 (1337 aa).

2 disordered regions span residues 1–108 and 198–226; these read MEEN…LVHS and GPTS…PPAP. Composition is skewed to low complexity over residues 31–45 and 54–63; these read TSEA…AATV and SGVGQSSDGG. The C2H2-type 1 zinc-finger motif lies at 248–271; that stretch reads FKCKMCQYRSSTKATLLRHMRERH. The interval 278–444 is disordered; the sequence is AAAAATGKRG…PPRRRGRPSR (167 aa). The segment covering 302 to 332 has biased composition (acidic residues); the sequence is DRPEEEEEDDDIVDAGAIDDLEEDSDYNPAE. A compositionally biased stretch (basic residues) spans 351–362; that stretch reads RPRRRPGRPRKL. Residues 363–372 are compositionally biased toward basic and acidic residues; sequence PRLETSDLHD. Residues 378–388 show a composition bias toward polar residues; it reads LVSSQSTQSPP. C2H2-type zinc fingers lie at residues 466-488, 496-518, 524-546, 563-585, 591-613, 622-644, 650-673, and 679-702; these read YLCR…VNSH, FRCL…MFNH, YKCD…AAVH, FPCP…MKTH, HMCD…LLTH, FKCE…QLSH, FKCS…AVKH, and FACE…RCRH. Disordered stretches follow at residues 733–767 and 963–999; these read LKQQ…TPPL and QCGG…ASHT. Pro residues predominate over residues 741-756; sequence PGPPLSSPGPEAPQEP. Phosphoserine is present on residues serine 976 and serine 1007. C2H2-type zinc fingers lie at residues 1019–1041, 1047–1069, 1075–1097, and 1103–1126; these read FSCK…KRAH, FKCP…MAQH, HQCN…MLTH, and FSCH…QRLH. Residue lysine 1022 forms a Glycyl lysine isopeptide (Lys-Gly) (interchain with G-Cter in SUMO2) linkage. Position 1149 is a phosphoserine (serine 1149).

It belongs to the krueppel C2H2-type zinc-finger protein family. Interacts with NCOA6; may enhance ligand-dependent transcriptional activation by nuclear hormone receptors. Interacts with CNOT6. Interacts with CNOT9; the interaction is direct. Component of a nuclear receptor-mediated transcription complex composed of at least ZNF335, CCAR2 and EMSY; the complex stimulates the transcription of nuclear receptor target genes such as SOX9 and HOXA1. Within the complex interacts with EMSY and interacts (via C-terminus) with CCAR2. Interacts with members of histone H3'Lys4'(H3K4) methyltransferase complexes ASH2L, CXXC1, KMT2A/MLL1, RBBP5, SETD1A and WDR5. Component of a histone methylation complex composed of at least ZNF335, RBBP5, ASH2L and WDR5; the complex may have histone H3-specific methyltransferase activity, however does not have specificity for 'Lys-4' of histone H3. Interacts with RBBP5 and WDR5. Interacts with ASHL2. Components of this complex may associate with components of the ZNF335-CCAR2-EMSY nuclear receptor-mediated transcription complex to form a complex at least composed of ZNF335, HCFC1, CCAR2, EMSY, MKI67, RBBP5, ASH2L and WDR5. Within this complex also interacts with HCFC1 and MKI67. As to expression, expressed at low levels in cerebral cortex, hippocampus and cerebellum (at protein level).

It is found in the nucleus. Its function is as follows. Component or associated component of some histone methyltransferase complexes may regulate transcription through recruitment of those complexes on gene promoters. Enhances ligand-dependent transcriptional activation by nuclear hormone receptors. Plays an important role in neural progenitor cell proliferation and self-renewal through the regulation of specific genes involved brain development, including REST. Also controls the expression of genes involved in somatic development and regulates, for instance, lymphoblast proliferation. In Mus musculus (Mouse), this protein is Zinc finger protein 335 (Znf335).